A 287-amino-acid polypeptide reads, in one-letter code: Mu-like prophage FluMu DNA transposition protein B (287 aa).

The HTH cro/C1-type domain maps to 7-62 (LKQHLSDSQITQAQLAREAGVNAGALSAYLNDNYKGNIADVEAKLAAYLEKKAVQA). The H-T-H motif DNA-binding region spans 18 to 37 (QAQLAREAGVNAGALSAYLN). ATP is bound at residue 98-105 (GMSGVGKT).

In terms of biological role, this protein is a non-specific DNA-binding and ATP-hydrolyzing protein essential for bacteriophage integration and replication. This chain is Mu-like prophage FluMu DNA transposition protein B, found in Haemophilus influenzae (strain ATCC 51907 / DSM 11121 / KW20 / Rd).